Here is a 352-residue protein sequence, read N- to C-terminus: Carbohydrate sulfotransferase 11 (352 aa).

Residues 1 to 16 (MKPALLEVMRMNRICR) lie on the Cytoplasmic side of the membrane. A helical; Signal-anchor for type II membrane protein transmembrane segment spans residues 17 to 37 (MVLATCFGSFILVIFYFQSML). Topologically, residues 38-352 (HPVMRRNPFG…YSVPNYLKLD (315 aa)) are lumenal. 3'-phosphoadenylyl sulfate is bound by residues 124-130 (PKVACTN) and 186-194 (REPFERLVS). N-linked (GlcNAc...) asparagine glycosylation is found at N205, N223, N321, and N342.

The protein belongs to the sulfotransferase 2 family. N-glycosylated; required for activity and stability. As to expression, predominantly expressed in brain and kidney. Also expressed at weaker level in heart, spleen and lung. Expressed in developing chondrocytes.

It localises to the golgi apparatus membrane. It catalyses the reaction chondroitin beta-D-glucuronate + n 3'-phosphoadenylyl sulfate = chondroitin 4'-sulfate + n adenosine 3',5'-bisphosphate + n H(+). Catalyzes the transfer of sulfate to position 4 of the N-acetylgalactosamine (GalNAc) residue of chondroitin. Chondroitin sulfate constitutes the predominant proteoglycan present in cartilage and is distributed on the surfaces of many cells and extracellular matrices. Can also sulfate Gal residues in desulfated dermatan sulfate. Preferentially sulfates in GlcA-&gt;GalNAc unit than in IdoA-&gt;GalNAc unit. Does not form 4, 6-di-O-sulfated GalNAc when chondroitin sulfate C is used as an acceptor. This Mus musculus (Mouse) protein is Carbohydrate sulfotransferase 11 (Chst11).